Here is a 470-residue protein sequence, read N- to C-terminus: Poly(A) polymerase catalytic subunit (470 aa).

Catalysis depends on residues Asp192 and Asp194.

The protein belongs to the poxviridae poly(A) polymerase catalytic subunit family. Heterodimer of a large (catalytic) subunit and a small (regulatory) subunit.

It carries out the reaction RNA(n) + ATP = RNA(n)-3'-adenine ribonucleotide + diphosphate. In terms of biological role, polymerase that creates the 3'-poly(A) tail of mRNA's. This chain is Poly(A) polymerase catalytic subunit (PAPL), found in Myxoma virus (strain Lausanne) (MYXV).